A 445-amino-acid polypeptide reads, in one-letter code: Serine--tRNA ligase (445 aa).

250 to 252 (TAE) contributes to the L-serine binding site. 281–283 (RAE) is a binding site for ATP. E304 is a binding site for L-serine. Residue 368–371 (EISS) participates in ATP binding. Position 404 (S404) interacts with L-serine.

The protein belongs to the class-II aminoacyl-tRNA synthetase family. Type-1 seryl-tRNA synthetase subfamily. In terms of assembly, homodimer. The tRNA molecule binds across the dimer.

It localises to the cytoplasm. The catalysed reaction is tRNA(Ser) + L-serine + ATP = L-seryl-tRNA(Ser) + AMP + diphosphate + H(+). It carries out the reaction tRNA(Sec) + L-serine + ATP = L-seryl-tRNA(Sec) + AMP + diphosphate + H(+). Its pathway is aminoacyl-tRNA biosynthesis; selenocysteinyl-tRNA(Sec) biosynthesis; L-seryl-tRNA(Sec) from L-serine and tRNA(Sec): step 1/1. Functionally, catalyzes the attachment of serine to tRNA(Ser). Is also able to aminoacylate tRNA(Sec) with serine, to form the misacylated tRNA L-seryl-tRNA(Sec), which will be further converted into selenocysteinyl-tRNA(Sec). The sequence is that of Serine--tRNA ligase from Azorhizobium caulinodans (strain ATCC 43989 / DSM 5975 / JCM 20966 / LMG 6465 / NBRC 14845 / NCIMB 13405 / ORS 571).